The primary structure comprises 306 residues: Palmitoyl-protein thioesterase 1 (306 aa).

Positions 1-27 (MASPGCLWLLAVALLPWTCASRALQHL) are cleaved as a signal peptide. A lipid anchor (S-palmitoyl cysteine; by ZDHHC3 and ZDHHC7) is attached at Cys-6. Intrachain disulfides connect Cys-45/Cys-46, Cys-96/Cys-128, and Cys-152/Cys-160. Residue Ser-115 is part of the active site. N-linked (GlcNAc...) asparagine glycans are attached at residues Asn-197, Asn-212, and Asn-232. Active-site residues include Asp-233 and His-289.

The protein belongs to the palmitoyl-protein thioesterase family. As to quaternary structure, interacts with CLN5. Interacts with ATP5F1A and ATP5F1B. Post-translationally, glycosylated.

It localises to the lysosome. Its subcellular location is the secreted. The protein resides in the golgi apparatus. It is found in the endoplasmic reticulum. It carries out the reaction S-hexadecanoyl-L-cysteinyl-[protein] + H2O = L-cysteinyl-[protein] + hexadecanoate + H(+). The catalysed reaction is hexadecanoyl-CoA + H2O = hexadecanoate + CoA + H(+). It catalyses the reaction S-hexadecanoyl-N-acetylcysteamine + H2O = N-acetylcysteamine + hexadecanoate + H(+). The enzyme catalyses S-hexadecanoyl-N-acetylcysteine methyl ester + H2O = N-acetylcysteine methyl ester + hexadecanoate + H(+). Palmitoylation reduces PPT1 enzymatic activity. Functionally, has thioesterase activity against fatty acid thioesters with 14 -18 carbons, including palmitoyl-CoA, S-palmitoyl-N-acetylcysteamine, and palmitoylated proteins. In contrast to PPT2, PPT1 can hydrolyze palmitoylated proteins and palmitoylcysteine. The polypeptide is Palmitoyl-protein thioesterase 1 (PPT1) (Homo sapiens (Human)).